We begin with the raw amino-acid sequence, 658 residues long: MSKFLDMLSGSQCVSLEKCGDVVVSTNDCMIALYCHFCRDLFTQLPEFLRHLQSNHSDVLHFTKEHNVYSVEELLSGEQDKAHEDAQSAGHNSSSGDSRSLMNSEDSRAIDGSEENSDNSPVKPEQIGKQNEINLLAEVTNILLQTNDKEERINDELKPESGEFKGARKKANNESSSLKICDLKSHTIARTSRKRMSLVKNHILRVFDRDLIAKLEMKPLEPDSKLPITEPIQEDNIPGTCFQTPPKPIPSLSQLSVRKSSLTEANHICTKYDTKKTAPTMPKLLNNVPKSILTSQQAQVNSDSSEINETYHISEAASQVTKTTKSFPVQINQIEILQPLKLPKTLITPINEEGVSDQMENSTKNINNAQSLLKENPKKFLKKPSELEIKTKGGPNKFLNVIKSKADPIIVKRVQTTSAKDSTNKIQIRSNDKTKGFASEFNSTKIRKLKMENCVDLKTEDPCDNTNMRLNKMATIGSCEILKAVGLPAITDNAIEAIMLLPDELETMRIRADQFTKIYKKYYSIWNYRKIFPPAKPDFISQKIFALTREVNKTMLCNLANSDIKGIINQISVWHYNIYTQYIELDNISEIARYTLKLFSFLPVSFAYFCKWCDDIFILKKEYLKHLISHQVRFQCTKCIKVFKYKGYYEKHLRNAHP.

The C2H2-type 1 zinc finger occupies 33–56 (LYCHFCRDLFTQLPEFLRHLQSNH). Residues 80-131 (DKAHEDAQSAGHNSSSGDSRSLMNSEDSRAIDGSEENSDNSPVKPEQIGKQN) form a disordered region. Over residues 89 to 104 (AGHNSSSGDSRSLMNS) the composition is skewed to polar residues. 2 C2H2-type zinc fingers span residues 608–630 (YFCK…LISH) and 634–657 (FQCT…RNAH).

It belongs to the Teflon family.

The protein localises to the nucleus. Its subcellular location is the chromosome. Specifically required in males for proper segregation of autosomal bivalents at meiosis I. Expression is required in the male germ line prior to spermatocyte stage S4. May have a role as a bridging molecule maintaining adhesion to hold autosome bivalents together via heterochromatic connections. The protein is Protein teflon of Drosophila simulans (Fruit fly).